The sequence spans 250 residues: 2,3-bisphosphoglycerate-dependent phosphoglycerate mutase (250 aa).

Substrate-binding positions include 12–19 (RHGQSAWN), 25–26 (TG), R64, 91–94 (ERHY), K102, 118–119 (RR), and 185–186 (GN). Residue H13 is the Tele-phosphohistidine intermediate of the active site. E91 functions as the Proton donor/acceptor in the catalytic mechanism.

It belongs to the phosphoglycerate mutase family. BPG-dependent PGAM subfamily.

It carries out the reaction (2R)-2-phosphoglycerate = (2R)-3-phosphoglycerate. It participates in carbohydrate degradation; glycolysis; pyruvate from D-glyceraldehyde 3-phosphate: step 3/5. Its function is as follows. Catalyzes the interconversion of 2-phosphoglycerate and 3-phosphoglycerate. The protein is 2,3-bisphosphoglycerate-dependent phosphoglycerate mutase of Corynebacterium efficiens (strain DSM 44549 / YS-314 / AJ 12310 / JCM 11189 / NBRC 100395).